A 284-amino-acid chain; its full sequence is uncharacterized protein (284 aa).

Transmembrane regions (helical) follow at residues 174 to 194 (LFVL…YISI), 217 to 237 (MLIP…PGTA), and 241 to 261 (LIVL…SGSC).

Its subcellular location is the membrane. This is an uncharacterized protein from Saccharomyces cerevisiae (strain ATCC 204508 / S288c) (Baker's yeast).